The chain runs to 98 residues: Guanine nucleotide-binding protein subunit gamma 1 (98 aa).

Positions 19–98 (GKHRILAELA…GGEGCRCLIL (80 aa)) constitute a G protein gamma domain. Positions 20 to 50 (KHRILAELARVEQEVAFLEKELKEVENTDIV) form a coiled coil. Positions 88 to 94 (NGGEGCR) are regulates lipidation and cell membrane subcellular localization. Cys-93 is lipidated: S-palmitoyl cysteine. Residue Cys-95 is modified to Cysteine methyl ester. The S-farnesyl cysteine moiety is linked to residue Cys-95. Residues 96–98 (LIL) constitute a propeptide, removed in mature form.

In terms of assembly, g proteins are composed of 3 units, alpha, beta and gamma. Interacts with the beta subunit GB1. The dimer GB1-GG1 interacts with NDL1, NDL2 and NDL3. Binds to NUDT7. In terms of tissue distribution, mostly expressed in seedlings (especially at the hypocotyl/root junction), young cauline leaves, open flowers, and floral stems, and, to a lower extent, in roots (restricted to the stele), rosette leaves (restricted to veins), siliques, and unopened floral buds. Also present in hydathods.

The protein resides in the cell membrane. The protein localises to the golgi apparatus membrane. It localises to the golgi apparatus. Its subcellular location is the trans-Golgi network membrane. It is found in the cytoplasm. Guanine nucleotide-binding proteins (G proteins) are involved as a modulator or transducer in various transmembrane signaling systems. The beta and gamma chains are required for the GTPase activity, for replacement of GDP by GTP, and for G protein-effector interaction. Involved in the abscisic acid (ABA) and ethylene signaling pathways. Regulates acropetal transport of auxin (IAA) in roots and hypocotyls, and thus modulates root architecture (e.g. lateral root formation). The heterotrimeric G-protein controls defense responses to necrotrophic and vascular fungi probably by modulating cell wall-related genes expression; involved in resistance to fungal pathogens such as Alternaria brassicicola, Plectosphaerella cucumerina and Fusarium oxysporum. The chain is Guanine nucleotide-binding protein subunit gamma 1 (GG1) from Arabidopsis thaliana (Mouse-ear cress).